The sequence spans 232 residues: MADVDVKKAVVLLSGGLDSATVLAIAQAQGFECHTISFDYGQRHRAELIAAERISRVSGAKTHRVMEMNMHAIGGSALTDDSIDVPVSGVEKEMIPVTYVPARNTVFLSYALALAEVLEADDIFIGVNAVDYSGYPDCRPEYIAAYEKMANLATKAGVEGHKMHIQTPLIDLTKAEIIQTGVKLGVDYSQTVSCYQADKNGAACGICDSCRLRKQGFENAGVTDPTIYASNL.

ATP is bound at residue 13–23; it reads LSGGLDSATVL. Zn(2+) contacts are provided by Cys194, Cys204, Cys207, and Cys210.

It belongs to the QueC family. It depends on Zn(2+) as a cofactor.

The enzyme catalyses 7-carboxy-7-deazaguanine + NH4(+) + ATP = 7-cyano-7-deazaguanine + ADP + phosphate + H2O + H(+). It functions in the pathway purine metabolism; 7-cyano-7-deazaguanine biosynthesis. Catalyzes the ATP-dependent conversion of 7-carboxy-7-deazaguanine (CDG) to 7-cyano-7-deazaguanine (preQ(0)). This Hydrogenovibrio crunogenus (strain DSM 25203 / XCL-2) (Thiomicrospira crunogena) protein is 7-cyano-7-deazaguanine synthase.